The following is a 233-amino-acid chain: MVGGPRVVVALDFSDRKQLDEFVAKLDPGLCRLKVGKELFTTFGPAIVEQLQARGFEVFLDLKFHDIPNTTAQAVKAAAGLGVWMVNVHASGGRRMMEACREVLEQESHAPLLIAVTMLTSLSDEEIVEIGFPCSAQEMVGRLAVLAQSSGMDGVVCSAQEAPLLRRAHGEEFCLVTPGIRPAAAAADDQTRIVTPAQAITDGSSYLVVGRPITRALNPLDALQQIVKEVESV.

Residues aspartate 12, lysine 34, 61–70, threonine 120, arginine 181, glutamine 190, glycine 210, and arginine 211 each bind substrate; that span reads DLKFHDIPNT. The Proton donor role is filled by lysine 63.

The protein belongs to the OMP decarboxylase family. Type 1 subfamily. In terms of assembly, homodimer.

The enzyme catalyses orotidine 5'-phosphate + H(+) = UMP + CO2. Its pathway is pyrimidine metabolism; UMP biosynthesis via de novo pathway; UMP from orotate: step 2/2. In terms of biological role, catalyzes the decarboxylation of orotidine 5'-monophosphate (OMP) to uridine 5'-monophosphate (UMP). The protein is Orotidine 5'-phosphate decarboxylase of Hahella chejuensis (strain KCTC 2396).